Here is a 312-residue protein sequence, read N- to C-terminus: UPF0725 protein At3g19520 (312 aa).

Belongs to the UPF0725 (EMB2204) family.

This is UPF0725 protein At3g19520 from Arabidopsis thaliana (Mouse-ear cress).